Consider the following 147-residue polypeptide: Receptor activity-modifying protein 3 (147 aa).

The signal sequence occupies residues 1–22; sequence MKTPAQRLHLLPLLLLLCGECA. The Extracellular portion of the chain corresponds to 23–112; it reads QVCGCNETGM…CTVDRTHWED (90 aa). Residues Asn28, Asn57, Asn70, and Asn102 are each glycosylated (N-linked (GlcNAc...) asparagine). Disulfide bonds link Cys39-Cys71 and Cys56-Cys103. A helical membrane pass occupies residues 113 to 137; it reads PPDEVLIPLIAVPVVLTVAMAGLVV. Residues 138-147 are Cytoplasmic-facing; that stretch reads WRSKHTDRLL.

Belongs to the RAMP family. As to quaternary structure, heterodimer of CALCRL and RAMP3; interaction induces allosteric modulation of CALCRL function and ligand specificity for adrenomedullin/ADM and intermedin/ADM2. Heterodimer of CALCR and RAMP3; interaction form the receptor complex AMYR3 for amylin/IAPP. Interacts with GPER1. As to expression, expressed predominantly in the testis, embryonic and adult brain and in kidney.

The protein localises to the cell membrane. Its subcellular location is the membrane. Its function is as follows. Accessory protein that interacts with and modulates the function of G-protein coupled receptors including calcitonin gene-related peptide type 1 receptor (CALCRL), calcitonin receptor (CALCR) and G-protein coupled estrogen receptor 1 (GPER1). Required for the transport of CALCRL and GPER1 receptors to the plasma membrane. Plays a role in cardioprotection by reducing cardiac hypertrophy and perivascular fibrosis in a GPER1-dependent manner. Together with CALCRL, form a receptor complex for adrenomedullin/ADM and intermedin/ADM2. Together with CALCR, act as a receptor complex for amylin/IAPP. The sequence is that of Receptor activity-modifying protein 3 from Mus musculus (Mouse).